Consider the following 440-residue polypeptide: Probable D-serine dehydratase (440 aa).

An N6-(pyridoxal phosphate)lysine modification is found at K111.

It belongs to the serine/threonine dehydratase family. DsdA subfamily. The cofactor is pyridoxal 5'-phosphate.

It catalyses the reaction D-serine = pyruvate + NH4(+). The polypeptide is Probable D-serine dehydratase (Rhizobium leguminosarum bv. trifolii (strain WSM2304)).